The sequence spans 155 residues: Small ribosomal subunit protein uS7cz/uS7cy (155 aa).

Belongs to the universal ribosomal protein uS7 family. As to quaternary structure, part of the 30S ribosomal subunit.

It localises to the plastid. The protein localises to the chloroplast. Its function is as follows. One of the primary rRNA binding proteins, it binds directly to 16S rRNA where it nucleates assembly of the head domain of the 30S subunit. The chain is Small ribosomal subunit protein uS7cz/uS7cy (rps7-A) from Ceratophyllum demersum (Rigid hornwort).